The sequence spans 204 residues: Large ribosomal subunit protein uL4 (204 aa).

The segment at 49–75 is disordered; the sequence is TKGRSDVSGGGKKPWRQKGRGGARAGS.

This sequence belongs to the universal ribosomal protein uL4 family. As to quaternary structure, part of the 50S ribosomal subunit.

Its function is as follows. One of the primary rRNA binding proteins, this protein initially binds near the 5'-end of the 23S rRNA. It is important during the early stages of 50S assembly. It makes multiple contacts with different domains of the 23S rRNA in the assembled 50S subunit and ribosome. Forms part of the polypeptide exit tunnel. This chain is Large ribosomal subunit protein uL4, found in Campylobacter jejuni subsp. doylei (strain ATCC BAA-1458 / RM4099 / 269.97).